Consider the following 237-residue polypeptide: GATA zinc finger domain-containing protein 18 (237 aa).

Low complexity-rich tracts occupy residues 1-28 and 87-118; these read MAHN…KNNN and NTST…PNSN. Disordered regions lie at residues 1-31, 78-119, and 140-186; these read MAHN…NSEY, PTNT…NSNL, and FEEG…GGCS. The span at 140 to 151 shows a compositional bias: acidic residues; that stretch reads FEEGDDEEETSS. Low complexity predominate over residues 152 to 167; it reads DSDSSSSSSTSSSSSE. The GATA-type zinc-finger motif lies at 185–212; sequence CSICKTQETPYWRKGKDGDKTVYLCNAC.

The protein is GATA zinc finger domain-containing protein 18 (gtaR) of Dictyostelium discoideum (Social amoeba).